The sequence spans 208 residues: Uracil phosphoribosyltransferase (208 aa).

Residues Arg78, Arg103, and 130 to 138 (DPMLATANS) each bind 5-phospho-alpha-D-ribose 1-diphosphate. Uracil-binding positions include Ile193 and 198-200 (GDA). Residue Asp199 coordinates 5-phospho-alpha-D-ribose 1-diphosphate.

This sequence belongs to the UPRTase family. The cofactor is Mg(2+).

The enzyme catalyses UMP + diphosphate = 5-phospho-alpha-D-ribose 1-diphosphate + uracil. Its pathway is pyrimidine metabolism; UMP biosynthesis via salvage pathway; UMP from uracil: step 1/1. Allosterically activated by GTP. Functionally, catalyzes the conversion of uracil and 5-phospho-alpha-D-ribose 1-diphosphate (PRPP) to UMP and diphosphate. The polypeptide is Uracil phosphoribosyltransferase (Brucella ovis (strain ATCC 25840 / 63/290 / NCTC 10512)).